A 453-amino-acid chain; its full sequence is L-cysteine:1D-myo-inositol 2-amino-2-deoxy-alpha-D-glucopyranoside ligase (453 aa).

A Zn(2+)-binding site is contributed by cysteine 58. L-cysteinyl-5'-AMP contacts are provided by residues 58-61, threonine 73, and 96-98; these read CGIT and NVT. Residues 60–70 carry the 'HIGH' region motif; that stretch reads ITPYDATHMGH. A 'ERGGDP' region motif is present at residues 221–226; it reads ERGGDP. Residue tryptophan 262 participates in L-cysteinyl-5'-AMP binding. Zn(2+) is bound at residue cysteine 266. Position 284 to 286 (284 to 286) interacts with L-cysteinyl-5'-AMP; sequence GND. Residue histidine 291 participates in Zn(2+) binding. Valine 317 contacts L-cysteinyl-5'-AMP. The short motif at 323–327 is the 'KMSKS' region element; the sequence is KMSKS.

The protein belongs to the class-I aminoacyl-tRNA synthetase family. MshC subfamily. In terms of assembly, monomer. Requires Zn(2+) as cofactor.

The enzyme catalyses 1D-myo-inositol 2-amino-2-deoxy-alpha-D-glucopyranoside + L-cysteine + ATP = 1D-myo-inositol 2-(L-cysteinylamino)-2-deoxy-alpha-D-glucopyranoside + AMP + diphosphate + H(+). Functionally, catalyzes the ATP-dependent condensation of GlcN-Ins and L-cysteine to form L-Cys-GlcN-Ins. The protein is L-cysteine:1D-myo-inositol 2-amino-2-deoxy-alpha-D-glucopyranoside ligase of Rothia mucilaginosa (strain DY-18) (Stomatococcus mucilaginosus).